The sequence spans 432 residues: Adenylosuccinate synthetase (432 aa).

GTP is bound by residues 13–19 (GDEGKGK) and 41–43 (GHT). The Proton acceptor role is filled by aspartate 14. Mg(2+)-binding residues include aspartate 14 and glycine 41. Residues 14-17 (DEGK), 39-42 (NAGH), threonine 130, arginine 144, glutamine 225, threonine 240, and arginine 304 each bind IMP. The Proton donor role is filled by histidine 42. Residue 300–306 (ATTGRRR) coordinates substrate. Residues arginine 306, 332 to 334 (KLD), and 415 to 417 (STG) each bind GTP.

It belongs to the adenylosuccinate synthetase family. As to quaternary structure, homodimer. Requires Mg(2+) as cofactor.

Its subcellular location is the cytoplasm. The enzyme catalyses IMP + L-aspartate + GTP = N(6)-(1,2-dicarboxyethyl)-AMP + GDP + phosphate + 2 H(+). It participates in purine metabolism; AMP biosynthesis via de novo pathway; AMP from IMP: step 1/2. In terms of biological role, plays an important role in the de novo pathway of purine nucleotide biosynthesis. Catalyzes the first committed step in the biosynthesis of AMP from IMP. The polypeptide is Adenylosuccinate synthetase (Salmonella typhi).